The following is a 93-amino-acid chain: ATP-dependent Clp protease adapter protein ClpS (93 aa).

The protein belongs to the ClpS family. Binds to the N-terminal domain of the chaperone ClpA.

In terms of biological role, involved in the modulation of the specificity of the ClpAP-mediated ATP-dependent protein degradation. The protein is ATP-dependent Clp protease adapter protein ClpS of Gloeobacter violaceus (strain ATCC 29082 / PCC 7421).